Reading from the N-terminus, the 794-residue chain is DNA ligase (794 aa).

NAD(+) contacts are provided by residues 35–39, 84–85, and Glu-126; these read DAEYD and SL. Catalysis depends on Lys-128, which acts as the N6-AMP-lysine intermediate. NAD(+)-binding residues include Arg-149, Glu-186, Lys-302, and Lys-326. Cys-420, Cys-423, Cys-450, and Cys-456 together coordinate Zn(2+). In terms of domain architecture, BRCT spans 711-794; it reads VEGLPLAGQT…KLFDEHGVAR (84 aa).

This sequence belongs to the NAD-dependent DNA ligase family. LigA subfamily. Requires Mg(2+) as cofactor. Mn(2+) is required as a cofactor.

The catalysed reaction is NAD(+) + (deoxyribonucleotide)n-3'-hydroxyl + 5'-phospho-(deoxyribonucleotide)m = (deoxyribonucleotide)n+m + AMP + beta-nicotinamide D-nucleotide.. DNA ligase that catalyzes the formation of phosphodiester linkages between 5'-phosphoryl and 3'-hydroxyl groups in double-stranded DNA using NAD as a coenzyme and as the energy source for the reaction. It is essential for DNA replication and repair of damaged DNA. The sequence is that of DNA ligase from Pseudomonas aeruginosa (strain LESB58).